The primary structure comprises 196 residues: Ribosome maturation factor RimP (196 aa).

Residues 164–196 (LAPQKPNKPGPKKPGHDKKKPSNEPAAGKPRAE) are disordered. Basic residues predominate over residues 173–182 (GPKKPGHDKK).

The protein belongs to the RimP family.

It localises to the cytoplasm. In terms of biological role, required for maturation of 30S ribosomal subunits. The polypeptide is Ribosome maturation factor RimP (Xanthomonas campestris pv. campestris (strain 8004)).